The chain runs to 294 residues: Probable 2-(5''-triphosphoribosyl)-3'-dephosphocoenzyme-A synthase (294 aa).

The protein belongs to the CitG/MdcB family.

It catalyses the reaction 3'-dephospho-CoA + ATP = 2'-(5''-triphospho-alpha-D-ribosyl)-3'-dephospho-CoA + adenine. The protein is Probable 2-(5''-triphosphoribosyl)-3'-dephosphocoenzyme-A synthase of Streptococcus pyogenes serotype M3 (strain ATCC BAA-595 / MGAS315).